The sequence spans 238 residues: UPF0280 protein Msm_0088 (238 aa).

The protein belongs to the UPF0280 family.

In Methanobrevibacter smithii (strain ATCC 35061 / DSM 861 / OCM 144 / PS), this protein is UPF0280 protein Msm_0088.